The chain runs to 43 residues: Potassium channel toxin gamma-KTx 4.3 (43 aa).

4 disulfides stabilise this stretch: C5-C23, C11-C34, C20-C39, and C24-C41.

It belongs to the ergtoxin family. Gamma-KTx 4 subfamily. In terms of tissue distribution, expressed by the venom gland.

It localises to the secreted. Its function is as follows. Reversibly blocks Kv11/ERG potassium channels. The polypeptide is Potassium channel toxin gamma-KTx 4.3 (Centruroides exilicauda (Bark scorpion)).